We begin with the raw amino-acid sequence, 74 residues long: MFTMKKSLLFFFFLGTIALSLCEEERGADEEENGAEITDEEVKRGILLNTLKGAAKNVAGVLLDKLKCKITGGC.

An N-terminal signal peptide occupies residues 1-22 (MFTMKKSLLFFFFLGTIALSLC). Positions 23-42 (EEERGADEEENGAEITDEEV) are excised as a propeptide. A disulfide bond links Cys-68 and Cys-74.

In terms of tissue distribution, expressed by the skin glands.

It is found in the secreted. Functionally, antimicrobial peptide. In Pelophylax fukienensis (Fukien gold-striped pond frog), this protein is Pelophylaxin-2.